We begin with the raw amino-acid sequence, 122 residues long: Large ribosomal subunit protein uL14 (122 aa).

This sequence belongs to the universal ribosomal protein uL14 family. In terms of assembly, part of the 50S ribosomal subunit. Forms a cluster with proteins L3 and L19. In the 70S ribosome, L14 and L19 interact and together make contacts with the 16S rRNA in bridges B5 and B8.

Functionally, binds to 23S rRNA. Forms part of two intersubunit bridges in the 70S ribosome. This is Large ribosomal subunit protein uL14 from Acinetobacter baumannii (strain AB307-0294).